The chain runs to 371 residues: Putative agmatine deiminase (371 aa).

Cysteine 361 acts as the Amidino-cysteine intermediate in catalysis.

This sequence belongs to the agmatine deiminase family.

It carries out the reaction agmatine + H2O = N-carbamoylputrescine + NH4(+). This chain is Putative agmatine deiminase, found in Selenomonas ruminantium.